We begin with the raw amino-acid sequence, 325 residues long: Elongation factor P--(R)-beta-lysine ligase (325 aa).

76-78 (SPE) contributes to the substrate binding site. ATP is bound by residues 100 to 102 (RNE) and asparagine 109. Tyrosine 118 is a substrate binding site. 244–245 (EL) serves as a coordination point for ATP. Glutamate 251 serves as a coordination point for substrate. Residue glycine 300 participates in ATP binding.

The protein belongs to the class-II aminoacyl-tRNA synthetase family. EpmA subfamily. In terms of assembly, homodimer.

The enzyme catalyses D-beta-lysine + L-lysyl-[protein] + ATP = N(6)-((3R)-3,6-diaminohexanoyl)-L-lysyl-[protein] + AMP + diphosphate + H(+). Functionally, with EpmB is involved in the beta-lysylation step of the post-translational modification of translation elongation factor P (EF-P) on 'Lys-34'. Catalyzes the ATP-dependent activation of (R)-beta-lysine produced by EpmB, forming a lysyl-adenylate, from which the beta-lysyl moiety is then transferred to the epsilon-amino group of EF-P 'Lys-34'. The polypeptide is Elongation factor P--(R)-beta-lysine ligase (Salmonella arizonae (strain ATCC BAA-731 / CDC346-86 / RSK2980)).